Consider the following 358-residue polypeptide: Phospho-N-acetylmuramoyl-pentapeptide-transferase (358 aa).

The next 10 membrane-spanning stretches (helical) occupy residues 21 to 41 (YLTL…FVVG), 71 to 91 (TMGG…WADL), 95 to 115 (YIWV…VDDY), 133 to 153 (FWQS…ASVA), 166 to 186 (VAVN…VGSS), 197 to 217 (GLAV…AYAA), 234 to 254 (AGEL…FLWF), 261 to 281 (VFMG…LAVL), 286 to 306 (LVLF…MLQV), and 337 to 357 (IVRF…TLKI).

It belongs to the glycosyltransferase 4 family. MraY subfamily. It depends on Mg(2+) as a cofactor.

It is found in the cell inner membrane. It catalyses the reaction UDP-N-acetyl-alpha-D-muramoyl-L-alanyl-gamma-D-glutamyl-meso-2,6-diaminopimeloyl-D-alanyl-D-alanine + di-trans,octa-cis-undecaprenyl phosphate = di-trans,octa-cis-undecaprenyl diphospho-N-acetyl-alpha-D-muramoyl-L-alanyl-D-glutamyl-meso-2,6-diaminopimeloyl-D-alanyl-D-alanine + UMP. The protein operates within cell wall biogenesis; peptidoglycan biosynthesis. In terms of biological role, catalyzes the initial step of the lipid cycle reactions in the biosynthesis of the cell wall peptidoglycan: transfers peptidoglycan precursor phospho-MurNAc-pentapeptide from UDP-MurNAc-pentapeptide onto the lipid carrier undecaprenyl phosphate, yielding undecaprenyl-pyrophosphoryl-MurNAc-pentapeptide, known as lipid I. This is Phospho-N-acetylmuramoyl-pentapeptide-transferase from Nitrosococcus oceani (strain ATCC 19707 / BCRC 17464 / JCM 30415 / NCIMB 11848 / C-107).